The following is a 310-amino-acid chain: tRNA dimethylallyltransferase (310 aa).

An ATP-binding site is contributed by 15-22 (GATASGKT). 17–22 (TASGKT) is a substrate binding site.

The protein belongs to the IPP transferase family. In terms of assembly, monomer. Mg(2+) serves as cofactor.

It carries out the reaction adenosine(37) in tRNA + dimethylallyl diphosphate = N(6)-dimethylallyladenosine(37) in tRNA + diphosphate. Its function is as follows. Catalyzes the transfer of a dimethylallyl group onto the adenine at position 37 in tRNAs that read codons beginning with uridine, leading to the formation of N6-(dimethylallyl)adenosine (i(6)A). This chain is tRNA dimethylallyltransferase, found in Nocardioides sp. (strain ATCC BAA-499 / JS614).